A 558-amino-acid polypeptide reads, in one-letter code: Potassium-transporting ATPase potassium-binding subunit (558 aa).

Transmembrane regions (helical) follow at residues 1–21, 66–86, 127–147, 166–186, 245–265, 281–301, 327–347, 354–374, 377–397, 416–436, 482–502, and 531–551; these read MEII…SGYL, FNGF…WLFL, MIVM…VCIA, IVRF…ILLM, IWSN…MLFL, ALIL…LTMW, FGAG…TGSV, LTPL…VFGG, VGLM…SLMV, IVLV…LAFM, ISTG…QLMI, and IVFI…LGPI.

The protein belongs to the KdpA family. As to quaternary structure, the system is composed of three essential subunits: KdpA, KdpB and KdpC.

It localises to the cell membrane. Functionally, part of the high-affinity ATP-driven potassium transport (or Kdp) system, which catalyzes the hydrolysis of ATP coupled with the electrogenic transport of potassium into the cytoplasm. This subunit binds the extracellular potassium ions and delivers the ions to the membrane domain of KdpB through an intramembrane tunnel. This chain is Potassium-transporting ATPase potassium-binding subunit, found in Staphylococcus aureus (strain MSSA476).